Here is a 237-residue protein sequence, read N- to C-terminus: Survival of motor neuron-related-splicing factor 30 (237 aa).

Residues 52–69 (SQPAEGTTSTKSSETVAP) show a composition bias toward polar residues. Disordered regions lie at residues 52 to 73 (SQPA…SHSW) and 149 to 198 (REYK…RSIF). The Tudor domain maps to 72-132 (SWRVGDHCMA…KKVEEGRIRD (61 aa)). A Nuclear localization signal motif is present at residues 142–160 (KELQAEQREYKKKKAQKKV). A compositionally biased stretch (basic residues) spans 151–161 (YKKKKAQKKVQ). Residues 162 to 175 (RMKELEQEREDQKS) show a composition bias toward basic and acidic residues. Residues 176 to 185 (KWQQFNNKAY) are compositionally biased toward polar residues.

It belongs to the SMN family. Associates with spliceosomes.

Its subcellular location is the nucleus speckle. The protein resides in the nucleus. It is found in the cajal body. In terms of biological role, involved in spliceosome assembly. This chain is Survival of motor neuron-related-splicing factor 30 (smndc1), found in Danio rerio (Zebrafish).